A 103-amino-acid chain; its full sequence is UPF0145 protein BCE33L0904 (103 aa).

This sequence belongs to the UPF0145 family.

The chain is UPF0145 protein BCE33L0904 from Bacillus cereus (strain ZK / E33L).